The following is a 115-amino-acid chain: Protachykinin-1 (115 aa).

An N-terminal signal peptide occupies residues 1–19 (MKILVALAVLALVSTQLFA). Positions 20–56 (EDIRANDDLNYWSDWSDSDQIKEELPEPFEHLLQRIA) are excised as a propeptide. Methionine amide occurs at positions 68 and 92.

The protein belongs to the tachykinin family. Post-translationally, the substance P form is cleaved at Pro-59 by the prolyl endopeptidase FAP (seprase) activity (in vitro). Substance P is also cleaved and degraded by Angiotensin-converting enzyme (ACE) and neprilysin (MME).

The protein resides in the secreted. Functionally, tachykinins are active peptides which excite neurons, evoke behavioral responses, are potent vasodilators and secretagogues, and contract (directly or indirectly) many smooth muscles. The polypeptide is Protachykinin-1 (TAC1) (Oryctolagus cuniculus (Rabbit)).